Here is a 442-residue protein sequence, read N- to C-terminus: 2-oxoisovalerate dehydrogenase subunit alpha, mitochondrial (442 aa).

The transit peptide at 1-42 (MSAAKIWRPSRGLRQAALLLLGRSGVRGLARSHPSRQQQQQF) directs the protein to the mitochondrion. The tract at residues 30–50 (ARSHPSRQQQQQFPSLDDKPQ) is disordered. Positions 155 and 156 each coordinate thiamine diphosphate. A K(+)-binding site is contributed by Ser-203. Residue Ser-204 participates in thiamine diphosphate binding. Residues Pro-205, Thr-208, and Gln-209 each contribute to the K(+) site. Residue Glu-235 participates in Mg(2+) binding. Residues Gly-236, Ala-237, and Arg-262 each coordinate thiamine diphosphate. Residues Asn-264 and Tyr-266 each coordinate Mg(2+). His-333 is a binding site for thiamine diphosphate. A Phosphoserine; by BCKDK modification is found at Ser-334. A Phosphothreonine modification is found at Thr-335. 2 positions are modified to phosphoserine: Ser-336 and Ser-344. An N6-acetyllysine; alternate modification is found at Lys-353. The residue at position 353 (Lys-353) is an N6-succinyllysine; alternate. Lys-377 carries the post-translational modification N6-succinyllysine.

Belongs to the BCKDHA family. Heterotetramer of 2 alpha/BCKDHA and 2 beta chains/BCKDHB that forms the branched-chain alpha-keto acid decarboxylase (E1) component of the BCKD complex. The branched-chain alpha-ketoacid dehydrogenase is a large complex composed of three major building blocks E1, E2 and E3. It is organized around E2, a 24-meric cubic core composed of DBT, to which are associated 6 to 12 copies of E1, and approximately 6 copies of the dehydrogenase E3, a DLD dimer. Interacts with PPM1K. The cofactor is thiamine diphosphate. Mg(2+) is required as a cofactor. Post-translationally, phosphorylated at Ser-334 by BCKDK and dephosphorylated by protein phosphatase PPM1K.

Its subcellular location is the mitochondrion matrix. The catalysed reaction is N(6)-[(R)-lipoyl]-L-lysyl-[protein] + 3-methyl-2-oxobutanoate + H(+) = N(6)-[(R)-S(8)-2-methylpropanoyldihydrolipoyl]-L-lysyl-[protein] + CO2. Functionally, together with BCKDHB forms the heterotetrameric E1 subunit of the mitochondrial branched-chain alpha-ketoacid dehydrogenase (BCKD) complex. The BCKD complex catalyzes the multi-step oxidative decarboxylation of alpha-ketoacids derived from the branched-chain amino-acids valine, leucine and isoleucine producing CO2 and acyl-CoA which is subsequently utilized to produce energy. The E1 subunit catalyzes the first step with the decarboxylation of the alpha-ketoacid forming an enzyme-product intermediate. A reductive acylation mediated by the lipoylamide cofactor of E2 extracts the acyl group from the E1 active site for the next step of the reaction. The sequence is that of 2-oxoisovalerate dehydrogenase subunit alpha, mitochondrial from Mus musculus (Mouse).